A 282-amino-acid polypeptide reads, in one-letter code: 3-methyl-2-oxobutanoate hydroxymethyltransferase (282 aa).

Asp-44 and Asp-83 together coordinate Mg(2+). 3-methyl-2-oxobutanoate is bound by residues 44–45, Asp-83, and Lys-113; that span reads DS. Residue Glu-115 coordinates Mg(2+). Glu-182 (proton acceptor) is an active-site residue.

The protein belongs to the PanB family. Homodecamer; pentamer of dimers. Mg(2+) serves as cofactor.

It localises to the cytoplasm. It carries out the reaction 3-methyl-2-oxobutanoate + (6R)-5,10-methylene-5,6,7,8-tetrahydrofolate + H2O = 2-dehydropantoate + (6S)-5,6,7,8-tetrahydrofolate. The protein operates within cofactor biosynthesis; (R)-pantothenate biosynthesis; (R)-pantoate from 3-methyl-2-oxobutanoate: step 1/2. Its function is as follows. Catalyzes the reversible reaction in which hydroxymethyl group from 5,10-methylenetetrahydrofolate is transferred onto alpha-ketoisovalerate to form ketopantoate. The sequence is that of 3-methyl-2-oxobutanoate hydroxymethyltransferase from Dehalococcoides mccartyi (strain ATCC BAA-2266 / KCTC 15142 / 195) (Dehalococcoides ethenogenes (strain 195)).